Reading from the N-terminus, the 92-residue chain is C-C motif chemokine 4 (92 aa).

Residues 1–23 form the signal peptide; the sequence is MKLCVTVLSLLVLAAAFCSPALS. 2 disulfide bridges follow: C34-C58 and C35-C74.

The protein belongs to the intercrine beta (chemokine CC) family. Homodimer. Interacts with CCR5. Detected in peripheral blood mononuclear cells and lymph nodes.

It is found in the secreted. In terms of biological role, monokine with inflammatory and chemokinetic properties. The sequence is that of C-C motif chemokine 4 (CCL4) from Macaca mulatta (Rhesus macaque).